Reading from the N-terminus, the 462-residue chain is 3-ketoacyl-CoA thiolase 2, peroxisomal (462 aa).

A peroxisome-targeting transit peptide spans 1–34; it reads MEKAIERQRVLLEHLRPSSSSSHNYEASLSASAC. Catalysis depends on Cys-138, which acts as the Acyl-thioester intermediate. Cys-138 and Cys-192 are disulfide-bonded. Residues His-393 and Cys-425 each act as proton acceptor in the active site.

It belongs to the thiolase-like superfamily. Thiolase family. In terms of assembly, forms homodimers. As to expression, accumulates in etiolated cotyledons and in seedlings, also present in roots, flowers and siliques (at protein level). High levels in wounded leaves.

The protein localises to the peroxisome. It localises to the glyoxysome. The catalysed reaction is an acyl-CoA + acetyl-CoA = a 3-oxoacyl-CoA + CoA. It functions in the pathway lipid metabolism; fatty acid metabolism. Its function is as follows. Involved in long chain fatty-acid beta-oxidation prior to gluconeogenesis during germination and subsequent seedling growth. Confers sensitivity to 2,4-dichlorophenoxybutiric acid (2,4-DB). Required for local and systemic induction of jasmonic acid (JA) biosynthesis after wounding. Seems to be involved in JA biosynthesis during senescence. May be involved in the positive regulation of abscisic acid-activated signaling pathway. The sequence is that of 3-ketoacyl-CoA thiolase 2, peroxisomal (PED1) from Arabidopsis thaliana (Mouse-ear cress).